The following is a 94-amino-acid chain: Small ubiquitin-related modifier 3 (94 aa).

A Glycyl lysine isopeptide (Lys-Gly) (interchain with G-Cter in SUMO) cross-link involves residue K11. The Ubiquitin-like domain occupies 15 to 92 (DHINLKVAGQ…IDVFQQQTGG (78 aa)). G92 participates in a covalent cross-link: Glycyl lysine isopeptide (Gly-Lys) (interchain with K-? in acceptor proteins). Positions 93 to 94 (SC) are excised as a propeptide.

It belongs to the ubiquitin family. SUMO subfamily. In terms of assembly, interacts with sae2 and ube2i. Covalently attached to a number of proteins. Polymeric chains can be formed through Lys-11 cross-linking. Post-translationally, cleavage of precursor form by a sentrin-specific protease is necessary for function.

It localises to the cytoplasm. The protein localises to the nucleus. It is found in the PML body. Ubiquitin-like protein which can be covalently attached to target lysines either as a monomer or as a lysine-linked polymer. Does not seem to be involved in protein degradation and may function as an antagonist of ubiquitin in the degradation process. Plays a role in a number of cellular processes such as nuclear transport, DNA replication and repair, mitosis and signal transduction. Covalent attachment to its substrates requires prior activation by the E1 complex sae1-sae2 and linkage to the E2 enzyme ube2i. The sequence is that of Small ubiquitin-related modifier 3 (sumo3) from Danio rerio (Zebrafish).